Here is a 530-residue protein sequence, read N- to C-terminus: T-complex protein 1 subunit zeta-2 (530 aa).

It belongs to the TCP-1 chaperonin family. Component of the chaperonin-containing T-complex (TRiC), a heterooligomeric complex of about 850 to 900 kDa that forms two stacked rings, 12 to 16 nm in diameter. In terms of tissue distribution, testis-specific.

The protein localises to the cytoplasm. Component of the chaperonin-containing T-complex (TRiC), a molecular chaperone complex that assists the folding of proteins upon ATP hydrolysis. The chain is T-complex protein 1 subunit zeta-2 (CCT6B) from Homo sapiens (Human).